The sequence spans 362 residues: Microfibril-associated glycoprotein 3 (362 aa).

The first 18 residues, 1–18 (MKLHCCLFTLVASIIVPA), serve as a signal peptide directing secretion. The Extracellular segment spans residues 19–147 (AFVLEDVDFD…LRVIFTSGDM (129 aa)). Asparagine 36, asparagine 41, and asparagine 110 each carry an N-linked (GlcNAc...) asparagine glycan. The 93-residue stretch at 45–137 (PSSFELSASS…SPIRASYSVT (93 aa)) folds into the Ig-like C2-type domain. Cysteine 73 and cysteine 124 are joined by a disulfide. A helical transmembrane segment spans residues 148 to 170 (SVYYMIVCLIAFTITLILNVTRL). Topologically, residues 171–362 (CMMSSHLRKT…KDGAYENCQL (192 aa)) are cytoplasmic. 2 disordered regions span residues 285–306 (VINP…GSLN) and 323–350 (ETKS…ESNC). The segment covering 323–337 (ETKSIDTESQGSSHF) has biased composition (polar residues).

In terms of processing, glycosylated.

It localises to the cell membrane. Functionally, component of the elastin-associated microfibrils. In Homo sapiens (Human), this protein is Microfibril-associated glycoprotein 3 (MFAP3).